We begin with the raw amino-acid sequence, 380 residues long: Tetraacyldisaccharide 4'-kinase (380 aa).

Position 51–58 (51–58) interacts with ATP; that stretch reads SVGGTGKT.

Belongs to the LpxK family.

The enzyme catalyses a lipid A disaccharide + ATP = a lipid IVA + ADP + H(+). Its pathway is glycolipid biosynthesis; lipid IV(A) biosynthesis; lipid IV(A) from (3R)-3-hydroxytetradecanoyl-[acyl-carrier-protein] and UDP-N-acetyl-alpha-D-glucosamine: step 6/6. Transfers the gamma-phosphate of ATP to the 4'-position of a tetraacyldisaccharide 1-phosphate intermediate (termed DS-1-P) to form tetraacyldisaccharide 1,4'-bis-phosphate (lipid IVA). In Bacteroides thetaiotaomicron (strain ATCC 29148 / DSM 2079 / JCM 5827 / CCUG 10774 / NCTC 10582 / VPI-5482 / E50), this protein is Tetraacyldisaccharide 4'-kinase.